The chain runs to 290 residues: Small ribosomal subunit protein uS2 (290 aa).

Residues 263 to 282 (ATAGATWEAEAGGDWAAESA) are compositionally biased toward low complexity. A disordered region spans residues 263–290 (ATAGATWEAEAGGDWAAESAQPNPETKW).

The protein belongs to the universal ribosomal protein uS2 family. As to quaternary structure, component of the small ribosomal subunit. Mature ribosomes consist of a small (40S) and a large (60S) subunit. The 40S subunit contains about 33 different proteins and 1 molecule of RNA (18S). The 60S subunit contains about 49 different proteins and 3 molecules of RNA (25S, 5.8S and 5S). Interacts with rps21.

It localises to the cytoplasm. In terms of biological role, required for the assembly and/or stability of the 40S ribosomal subunit. Required for the processing of the 20S rRNA-precursor to mature 18S rRNA in a late step of the maturation of 40S ribosomal subunits. The chain is Small ribosomal subunit protein uS2 (rps0) from Talaromyces stipitatus (strain ATCC 10500 / CBS 375.48 / QM 6759 / NRRL 1006) (Penicillium stipitatum).